Here is a 462-residue protein sequence, read N- to C-terminus: Arginine biosynthesis bifunctional protein ArgJ, mitochondrial (462 aa).

Positions 189, 215, 236, 327, 457, and 462 each coordinate substrate. The Nucleophile role is filled by threonine 236.

This sequence belongs to the ArgJ family. As to quaternary structure, heterodimer of an alpha and a beta chain. In terms of processing, the alpha and beta chains are autoproteolytically processed from a single precursor protein within the mitochondrion.

Its subcellular location is the mitochondrion matrix. The enzyme catalyses N(2)-acetyl-L-ornithine + L-glutamate = N-acetyl-L-glutamate + L-ornithine. The catalysed reaction is L-glutamate + acetyl-CoA = N-acetyl-L-glutamate + CoA + H(+). The protein operates within amino-acid biosynthesis; L-arginine biosynthesis; L-ornithine and N-acetyl-L-glutamate from L-glutamate and N(2)-acetyl-L-ornithine (cyclic): step 1/1. It functions in the pathway amino-acid biosynthesis; L-arginine biosynthesis; N(2)-acetyl-L-ornithine from L-glutamate: step 1/4. Catalyzes two activities which are involved in the cyclic version of arginine biosynthesis: the synthesis of acetylglutamate from glutamate and acetyl-CoA, and of ornithine by transacetylation between acetylornithine and glutamate. The polypeptide is Arginine biosynthesis bifunctional protein ArgJ, mitochondrial (Postia placenta (strain ATCC 44394 / Madison 698-R) (Brown rot fungus)).